A 443-amino-acid chain; its full sequence is Putative phosphoribosyl transferase MT0597 (443 aa).

It in the N-terminal section; belongs to the purine/pyrimidine phosphoribosyltransferase family. This sequence in the C-terminal section; belongs to the dienelactone hydrolase family.

This chain is Putative phosphoribosyl transferase MT0597, found in Mycobacterium tuberculosis (strain CDC 1551 / Oshkosh).